The sequence spans 360 residues: Phospho-N-acetylmuramoyl-pentapeptide-transferase (360 aa).

The next 10 helical transmembrane spans lie at 25 to 45 (RGIL…PWMI), 73 to 93 (TMGG…WADL), 97 to 117 (YVWT…VDDY), 132 to 152 (WKYF…YMTA), 167 to 187 (TIEI…IVGS), 199 to 219 (GLAI…CYLS), 236 to 256 (AGEL…FLWF), 263 to 283 (VFMG…IAVI), 288 to 308 (VVLF…MIQV), and 338 to 358 (VIVR…ATLK).

It belongs to the glycosyltransferase 4 family. MraY subfamily. Mg(2+) serves as cofactor.

Its subcellular location is the cell inner membrane. The enzyme catalyses UDP-N-acetyl-alpha-D-muramoyl-L-alanyl-gamma-D-glutamyl-meso-2,6-diaminopimeloyl-D-alanyl-D-alanine + di-trans,octa-cis-undecaprenyl phosphate = di-trans,octa-cis-undecaprenyl diphospho-N-acetyl-alpha-D-muramoyl-L-alanyl-D-glutamyl-meso-2,6-diaminopimeloyl-D-alanyl-D-alanine + UMP. Its pathway is cell wall biogenesis; peptidoglycan biosynthesis. Functionally, catalyzes the initial step of the lipid cycle reactions in the biosynthesis of the cell wall peptidoglycan: transfers peptidoglycan precursor phospho-MurNAc-pentapeptide from UDP-MurNAc-pentapeptide onto the lipid carrier undecaprenyl phosphate, yielding undecaprenyl-pyrophosphoryl-MurNAc-pentapeptide, known as lipid I. The protein is Phospho-N-acetylmuramoyl-pentapeptide-transferase of Azotobacter vinelandii (strain DJ / ATCC BAA-1303).